The primary structure comprises 591 residues: Aspartate--tRNA(Asp/Asn) ligase (591 aa).

Residue Glu-176 participates in L-aspartate binding. The interval Gln-200–Lys-203 is aspartate. Position 222 (Arg-222) interacts with L-aspartate. Residues Arg-222–Glu-224 and Gln-231 contribute to the ATP site. His-450 contacts L-aspartate. Residue Glu-484 participates in ATP binding. Arg-491 is an L-aspartate binding site. ATP is bound at residue Gly-536–Arg-539.

Belongs to the class-II aminoacyl-tRNA synthetase family. Type 1 subfamily. In terms of assembly, homodimer.

Its subcellular location is the cytoplasm. The catalysed reaction is tRNA(Asx) + L-aspartate + ATP = L-aspartyl-tRNA(Asx) + AMP + diphosphate. Aspartyl-tRNA synthetase with relaxed tRNA specificity since it is able to aspartylate not only its cognate tRNA(Asp) but also tRNA(Asn). Reaction proceeds in two steps: L-aspartate is first activated by ATP to form Asp-AMP and then transferred to the acceptor end of tRNA(Asp/Asn). In Bacillus mycoides (strain KBAB4) (Bacillus weihenstephanensis), this protein is Aspartate--tRNA(Asp/Asn) ligase.